The primary structure comprises 321 residues: MTSIMTNPAAMAALQTLRAINHNLETTQGRISSGYRVETAADNAAYWSIATTMRSDNAALSTVHDALGLGAAKVDTFYSAMDTVIDVMTEIKAKLVAASEPGVDKDKINKEVAELKSQLNSAAQSASFSGENWLYNGASAALGTKSIVASFNRSADGSVTVSTLNYDTAKSVLIDVTDPARGMLTKAVNADALQSTPTGTARNYYLIDAGAAPAGATEIEIDNATTGAQLGDMISVVDELISQLTDSAATLGAITSRIEMQESFVANLMDVIDKGVGRLVDADMNEESTRLKALQTQQQLGIQSLSIANTTSENILRLFQE.

The protein belongs to the bacterial flagellin family.

The protein localises to the secreted. It is found in the bacterial flagellum. In terms of biological role, flagellin is the subunit protein which polymerizes to form the filaments of bacterial flagella. The polypeptide is Flagellin C (flaC) (Rhizobium meliloti (strain 1021) (Ensifer meliloti)).